Consider the following 385-residue polypeptide: 8-amino-7-oxononanoate synthase (385 aa).

Arg-21 is a binding site for substrate. Gly-108–Phe-109 is a pyridoxal 5'-phosphate binding site. His-133 contacts substrate. Positions 179, 207, and 233 each coordinate pyridoxal 5'-phosphate. Lys-236 is modified (N6-(pyridoxal phosphate)lysine). Thr-352 is a substrate binding site.

It belongs to the class-II pyridoxal-phosphate-dependent aminotransferase family. BioF subfamily. As to quaternary structure, homodimer. It depends on pyridoxal 5'-phosphate as a cofactor.

The enzyme catalyses 6-carboxyhexanoyl-[ACP] + L-alanine + H(+) = (8S)-8-amino-7-oxononanoate + holo-[ACP] + CO2. The protein operates within cofactor biosynthesis; biotin biosynthesis. Functionally, catalyzes the decarboxylative condensation of pimeloyl-[acyl-carrier protein] and L-alanine to produce 8-amino-7-oxononanoate (AON), [acyl-carrier protein], and carbon dioxide. This chain is 8-amino-7-oxononanoate synthase, found in Salmonella paratyphi B (strain ATCC BAA-1250 / SPB7).